Consider the following 132-residue polypeptide: MTMTDPIADMLTRIRNASAVKHDTVDVPASNMKKDIANILLNEGFIKGFDVIEDGKQGILRLQLKYGQSKERVITGIKRISKPGLKVYAKRDEIPRVLGGLGIAIISTSKGITTDKVARKEGVGGEVIAYIW.

It belongs to the universal ribosomal protein uS8 family. In terms of assembly, part of the 30S ribosomal subunit. Contacts proteins S5 and S12.

One of the primary rRNA binding proteins, it binds directly to 16S rRNA central domain where it helps coordinate assembly of the platform of the 30S subunit. This is Small ribosomal subunit protein uS8 from Alkaliphilus metalliredigens (strain QYMF).